Consider the following 341-residue polypeptide: L-threonine 3-dehydrogenase (341 aa).

Cys-38 contacts Zn(2+). Active-site charge relay system residues include Thr-40 and His-43. The Zn(2+) site is built by His-63, Glu-64, Cys-93, Cys-96, Cys-99, and Cys-107. NAD(+) contacts are provided by residues Ile-175, Asp-195, Arg-200, 262–264, and 286–287; these read LGI and IY.

Belongs to the zinc-containing alcohol dehydrogenase family. As to quaternary structure, homotetramer. The cofactor is Zn(2+).

The protein localises to the cytoplasm. It carries out the reaction L-threonine + NAD(+) = (2S)-2-amino-3-oxobutanoate + NADH + H(+). It functions in the pathway amino-acid degradation; L-threonine degradation via oxydo-reductase pathway; glycine from L-threonine: step 1/2. In terms of biological role, catalyzes the NAD(+)-dependent oxidation of L-threonine to 2-amino-3-ketobutyrate. The chain is L-threonine 3-dehydrogenase from Proteus mirabilis (strain HI4320).